We begin with the raw amino-acid sequence, 262 residues long: tRNA pseudouridine synthase A (262 aa).

Asp-52 serves as the catalytic Nucleophile. A substrate-binding site is contributed by Tyr-103.

This sequence belongs to the tRNA pseudouridine synthase TruA family.

It carries out the reaction uridine(38/39/40) in tRNA = pseudouridine(38/39/40) in tRNA. In terms of biological role, formation of pseudouridine at positions 38, 39 and 40 in the anticodon stem and loop of transfer RNAs. The sequence is that of tRNA pseudouridine synthase A from Methanococcus maripaludis (strain DSM 14266 / JCM 13030 / NBRC 101832 / S2 / LL).